A 308-amino-acid polypeptide reads, in one-letter code: Ribosomal protein L11 methyltransferase (308 aa).

S-adenosyl-L-methionine-binding residues include T160, G181, D203, and N245.

Belongs to the methyltransferase superfamily. PrmA family.

It is found in the cytoplasm. The catalysed reaction is L-lysyl-[protein] + 3 S-adenosyl-L-methionine = N(6),N(6),N(6)-trimethyl-L-lysyl-[protein] + 3 S-adenosyl-L-homocysteine + 3 H(+). Methylates ribosomal protein L11. This chain is Ribosomal protein L11 methyltransferase, found in Thermoanaerobacter pseudethanolicus (strain ATCC 33223 / 39E) (Clostridium thermohydrosulfuricum).